Here is a 662-residue protein sequence, read N- to C-terminus: Interferon-induced GTP-binding protein Mx1 (662 aa).

An N-acetylmethionine modification is found at methionine 1. In terms of domain architecture, Dynamin-type G spans aspartate 67 to proline 340. Residues glycine 77–serine 84 form a G1 motif region. A GTP-binding site is contributed by glycine 77 to serine 84. A G2 motif region spans residues valine 102–arginine 104. The interval aspartate 178–glycine 181 is G3 motif. Residues aspartate 178–isoleucine 182 and threonine 247–aspartate 250 each bind GTP. The interval threonine 247 to aspartate 250 is G4 motif. A G5 motif region spans residues lysine 279–glycine 282. Residues leucine 341 to glutamate 366 form a bundle signaling element (BSE) region. Residues glutamate 366 to cysteine 533 form a middle domain region. Residues aspartate 367–glutamate 632 are stalk. The tract at residues lysine 554–lysine 557 is critical for lipid-binding. The region spanning methionine 574–glycine 662 is the GED domain.

Belongs to the TRAFAC class dynamin-like GTPase superfamily. Dynamin/Fzo/YdjA family. As to quaternary structure, homooligomer. Oligomerizes into multimeric filamentous or ring-like structures by virtue of its stalk domain. Oligomerization is critical for GTPase activity, protein stability, and recognition of viral target structures. Interacts with TRPC1, TRPC3, TRPC4, TRPC5, TRPC6 and TRPC7. Interacts with HSPA5. Interacts with TUBB/TUBB5. Interacts with DDX39A and DDX39B. In terms of processing, ISGylated.

Its subcellular location is the cytoplasm. It is found in the endoplasmic reticulum membrane. It localises to the perinuclear region. In terms of biological role, interferon-induced dynamin-like GTPase with antiviral activity. In Pongo abelii (Sumatran orangutan), this protein is Interferon-induced GTP-binding protein Mx1 (MX1).